The primary structure comprises 296 residues: Phosphatidylserine decarboxylase proenzyme (296 aa).

Residues Asp-113, His-169, and Ser-256 each act as charge relay system; for autoendoproteolytic cleavage activity in the active site. The active-site Schiff-base intermediate with substrate; via pyruvic acid; for decarboxylase activity is the Ser-256. Position 256 is a pyruvic acid (Ser); by autocatalysis (Ser-256).

The protein belongs to the phosphatidylserine decarboxylase family. PSD-B subfamily. Prokaryotic type II sub-subfamily. In terms of assembly, heterodimer of a large membrane-associated beta subunit and a small pyruvoyl-containing alpha subunit. The cofactor is pyruvate. Post-translationally, is synthesized initially as an inactive proenzyme. Formation of the active enzyme involves a self-maturation process in which the active site pyruvoyl group is generated from an internal serine residue via an autocatalytic post-translational modification. Two non-identical subunits are generated from the proenzyme in this reaction, and the pyruvate is formed at the N-terminus of the alpha chain, which is derived from the carboxyl end of the proenzyme. The autoendoproteolytic cleavage occurs by a canonical serine protease mechanism, in which the side chain hydroxyl group of the serine supplies its oxygen atom to form the C-terminus of the beta chain, while the remainder of the serine residue undergoes an oxidative deamination to produce ammonia and the pyruvoyl prosthetic group on the alpha chain. During this reaction, the Ser that is part of the protease active site of the proenzyme becomes the pyruvoyl prosthetic group, which constitutes an essential element of the active site of the mature decarboxylase.

The protein localises to the cell membrane. It carries out the reaction a 1,2-diacyl-sn-glycero-3-phospho-L-serine + H(+) = a 1,2-diacyl-sn-glycero-3-phosphoethanolamine + CO2. It functions in the pathway phospholipid metabolism; phosphatidylethanolamine biosynthesis; phosphatidylethanolamine from CDP-diacylglycerol: step 2/2. Catalyzes the formation of phosphatidylethanolamine (PtdEtn) from phosphatidylserine (PtdSer). In Clostridium kluyveri (strain ATCC 8527 / DSM 555 / NBRC 12016 / NCIMB 10680 / K1), this protein is Phosphatidylserine decarboxylase proenzyme.